Here is a 72-residue protein sequence, read N- to C-terminus: Probable protein E5B (72 aa).

The sequence is that of Probable protein E5B from Homo sapiens (Human).